The primary structure comprises 347 residues: Ribosomal RNA small subunit methyltransferase C (347 aa).

The protein belongs to the methyltransferase superfamily. RsmC family. In terms of assembly, monomer.

The protein localises to the cytoplasm. The catalysed reaction is guanosine(1207) in 16S rRNA + S-adenosyl-L-methionine = N(2)-methylguanosine(1207) in 16S rRNA + S-adenosyl-L-homocysteine + H(+). Specifically methylates the guanine in position 1207 of 16S rRNA in the 30S particle. In Serratia proteamaculans (strain 568), this protein is Ribosomal RNA small subunit methyltransferase C.